The primary structure comprises 194 residues: Imidazoleglycerol-phosphate dehydratase (194 aa).

It belongs to the imidazoleglycerol-phosphate dehydratase family.

The protein localises to the cytoplasm. The enzyme catalyses D-erythro-1-(imidazol-4-yl)glycerol 3-phosphate = 3-(imidazol-4-yl)-2-oxopropyl phosphate + H2O. It functions in the pathway amino-acid biosynthesis; L-histidine biosynthesis; L-histidine from 5-phospho-alpha-D-ribose 1-diphosphate: step 6/9. The polypeptide is Imidazoleglycerol-phosphate dehydratase (Rubrobacter xylanophilus (strain DSM 9941 / JCM 11954 / NBRC 16129 / PRD-1)).